Reading from the N-terminus, the 89-residue chain is UPF0223 protein BcerKBAB4_3787 (89 aa).

This sequence belongs to the UPF0223 family.

This chain is UPF0223 protein BcerKBAB4_3787, found in Bacillus mycoides (strain KBAB4) (Bacillus weihenstephanensis).